The following is a 466-amino-acid chain: Glutamate--tRNA ligase 2 (466 aa).

A 'HIGH' region motif is present at residues 9–19 (PSPTGSLHLGG). The short motif at 236-240 (KLSKR) is the 'KMSKS' region element. Residue lysine 239 participates in ATP binding.

Belongs to the class-I aminoacyl-tRNA synthetase family. Glutamate--tRNA ligase type 1 subfamily. In terms of assembly, monomer.

It is found in the cytoplasm. It carries out the reaction tRNA(Glu) + L-glutamate + ATP = L-glutamyl-tRNA(Glu) + AMP + diphosphate. Functionally, catalyzes the attachment of glutamate to tRNA(Glu) in a two-step reaction: glutamate is first activated by ATP to form Glu-AMP and then transferred to the acceptor end of tRNA(Glu). The polypeptide is Glutamate--tRNA ligase 2 (Anaplasma marginale (strain St. Maries)).